Reading from the N-terminus, the 430-residue chain is Trigger factor (430 aa).

In terms of domain architecture, PPIase FKBP-type spans 163-248 (GNIAIIDFKG…IKDIKVKELP (86 aa)).

It belongs to the FKBP-type PPIase family. Tig subfamily.

It localises to the cytoplasm. The enzyme catalyses [protein]-peptidylproline (omega=180) = [protein]-peptidylproline (omega=0). In terms of biological role, involved in protein export. Acts as a chaperone by maintaining the newly synthesized protein in an open conformation. Functions as a peptidyl-prolyl cis-trans isomerase. This Clostridium botulinum (strain ATCC 19397 / Type A) protein is Trigger factor.